Consider the following 467-residue polypeptide: Hydroxyacid-oxoacid transhydrogenase, mitochondrial (467 aa).

N6-acetyllysine is present on K445. At S452 the chain carries Phosphoserine.

The protein belongs to the iron-containing alcohol dehydrogenase family. Hydroxyacid-oxoacid transhydrogenase subfamily. As to expression, only expressed in adult liver.

The protein localises to the mitochondrion. The enzyme catalyses (S)-3-hydroxybutanoate + 2-oxoglutarate = (R)-2-hydroxyglutarate + acetoacetate. It carries out the reaction 4-hydroxybutanoate + 2-oxoglutarate = (R)-2-hydroxyglutarate + succinate semialdehyde. Its function is as follows. Catalyzes the cofactor-independent reversible oxidation of gamma-hydroxybutyrate (GHB) to succinic semialdehyde (SSA) coupled to reduction of 2-ketoglutarate (2-KG) to D-2-hydroxyglutarate (D-2-HG). D,L-3-hydroxyisobutyrate and L-3-hydroxybutyrate (L-3-OHB) are also substrates for HOT with 10-fold lower activities. The sequence is that of Hydroxyacid-oxoacid transhydrogenase, mitochondrial (ADHFE1) from Homo sapiens (Human).